Here is a 72-residue protein sequence, read N- to C-terminus: MSLPILDQLEEKIKQAVETIQLLQLEVEELKEKNTTVEQEKETLRQEYEQLKSEQQSFQDRLRSLLGQIDNV.

The stretch at 5–71 (ILDQLEEKIK…LRSLLGQIDN (67 aa)) forms a coiled coil.

It belongs to the ZapB family. In terms of assembly, homodimer. The ends of the coiled-coil dimer bind to each other, forming polymers. Interacts with FtsZ.

The protein localises to the cytoplasm. Functionally, non-essential, abundant cell division factor that is required for proper Z-ring formation. It is recruited early to the divisome by direct interaction with FtsZ, stimulating Z-ring assembly and thereby promoting cell division earlier in the cell cycle. Its recruitment to the Z-ring requires functional FtsA or ZipA. This is Cell division protein ZapB from Actinobacillus pleuropneumoniae serotype 5b (strain L20).